Reading from the N-terminus, the 171-residue chain is Secretion monitor (171 aa).

A signal peptide spans 1–30 (MIGILNRWRQFGRRYFWPHLLLGMVAASLG).

The protein belongs to the SecM family.

It is found in the cytoplasm. It localises to the cytosol. The protein resides in the periplasm. Functionally, regulates secA expression by translational coupling of the secM secA operon. Translational pausing at a specific Pro residue 5 residues before the end of the protein may allow disruption of a mRNA repressor helix that normally suppresses secA translation initiation. This is Secretion monitor from Pectobacterium atrosepticum (strain SCRI 1043 / ATCC BAA-672) (Erwinia carotovora subsp. atroseptica).